Consider the following 331-residue polypeptide: Protein FLX-like 1 (331 aa).

A disordered region spans residues M1–S51. A coiled-coil region spans residues I69 to A252. Residues Q306 to Q321 show a composition bias toward low complexity. The segment at Q306–R331 is disordered. Pro residues predominate over residues Q322–R331.

Belongs to the FLX family. In terms of assembly, interacts with FRI.

Has no transcriptional activation activity. The sequence is that of Protein FLX-like 1 (FLXL1) from Arabidopsis thaliana (Mouse-ear cress).